Consider the following 110-residue polypeptide: Large ribosomal subunit protein uL22 (110 aa).

The protein belongs to the universal ribosomal protein uL22 family. Part of the 50S ribosomal subunit.

In terms of biological role, this protein binds specifically to 23S rRNA; its binding is stimulated by other ribosomal proteins, e.g. L4, L17, and L20. It is important during the early stages of 50S assembly. It makes multiple contacts with different domains of the 23S rRNA in the assembled 50S subunit and ribosome. Its function is as follows. The globular domain of the protein is located near the polypeptide exit tunnel on the outside of the subunit, while an extended beta-hairpin is found that lines the wall of the exit tunnel in the center of the 70S ribosome. The polypeptide is Large ribosomal subunit protein uL22 (Histophilus somni (strain 129Pt) (Haemophilus somnus)).